The chain runs to 74 residues: Translational regulator CsrA (74 aa).

This sequence belongs to the CsrA/RsmA family. In terms of assembly, homodimer; the beta-strands of each monomer intercalate to form a hydrophobic core, while the alpha-helices form wings that extend away from the core.

It localises to the cytoplasm. Functionally, a translational regulator that binds mRNA to regulate translation initiation and/or mRNA stability. Usually binds in the 5'-UTR at or near the Shine-Dalgarno sequence preventing ribosome-binding, thus repressing translation. Its main target seems to be the major flagellin gene, while its function is anatagonized by FliW. The protein is Translational regulator CsrA of Oceanobacillus iheyensis (strain DSM 14371 / CIP 107618 / JCM 11309 / KCTC 3954 / HTE831).